The following is a 360-amino-acid chain: MASVNPFDLLDDDAEDPSQIVASKPLKVVAPVQTAKSGKMPTKPPPPSQAVREARNAPGGGRGAGRGGSYGRGGRGGNNRDSRNNDGPANENGYGGGYRRSEEGDGARRGGPVGGYRGDRRGSYSNGGDSGDSERPRKNYDRHSRTAYGNEDKRDGAGRANWGTTQDDITPVTEESTAVVDKNLTVEKQDGEGEATDAKNETPAEKAEEKPEDKEMTLEEYEKVLEEKKKALQATKVEERKVDTKAFEAMQQLSSKKSNNDEVFIKLGTEKDKRITEREEKTRKSLSINEFLKPADGKSYYRPRGGYQGGREGRGPREGNQRDGGRNLREGGRNQRDGGAAAQAPTPAIGDSAQFPTLGK.

2 disordered regions span residues 1-216 (MASV…DKEM) and 250-360 (MQQL…TLGK). N-acetylalanine is present on alanine 2. Positions 58-77 (PGGGRGAGRGGSYGRGGRGG) are enriched in gly residues. Basic and acidic residues-rich tracts occupy residues 99–108 (RRSEEGDGAR) and 132–157 (DSERPRKNYDRHSRTAYGNEDKRDGA). Residues 162 to 176 (WGTTQDDITPVTEES) show a composition bias toward polar residues. 3 stretches are compositionally biased toward basic and acidic residues: residues 184–216 (LTVEKQDGEGEATDAKNETPAEKAEEKPEDKEM), 258–283 (SNNDEVFIKLGTEKDKRITEREEKTR), and 311–336 (REGRGPREGNQRDGGRNLREGGRNQR). In terms of domain architecture, FF spans 223–288 (KVLEEKKKAL…EEKTRKSLSI (66 aa)). Serine 258 is subject to Phosphoserine.

The protein belongs to the SERBP1-HABP4 family.

It localises to the nucleus. The protein localises to the cytoplasm. Its subcellular location is the perinuclear region. Its function is as follows. Ribosome-binding protein that acts as a regulator of mRNA translation by promoting ribosome inactivation. Binds RNA. The chain is RGG repeats nuclear RNA binding protein B from Arabidopsis thaliana (Mouse-ear cress).